A 228-amino-acid polypeptide reads, in one-letter code: Aquaporin Z 1 (228 aa).

Helical transmembrane passes span 9 to 29 (FLGT…AAAF) and 34 to 54 (IGLL…AYAV). The NPA 1 signature appears at 63–65 (NPA). A run of 3 helical transmembrane segments spans residues 82 to 102 (VGYI…LYVI), 129 to 149 (LTAA…IILG), and 156 to 176 (PVGF…LVSI). An NPA 2 motif is present at residues 184–186 (NPA). Residues 204-224 (WLFWVAPLIGAVIAGIVWKIV) traverse the membrane as a helical segment.

Belongs to the MIP/aquaporin (TC 1.A.8) family. Homotetramer.

Its subcellular location is the cell inner membrane. The enzyme catalyses H2O(in) = H2O(out). Its function is as follows. Channel that permits osmotically driven movement of water in both directions. It is involved in the osmoregulation and in the maintenance of cell turgor during volume expansion in rapidly growing cells. It mediates rapid entry or exit of water in response to abrupt changes in osmolarity. This is Aquaporin Z 1 from Rhizobium meliloti (strain 1021) (Ensifer meliloti).